Reading from the N-terminus, the 279-residue chain is DegV domain-containing protein CPE1310 (279 aa).

Residues 4-277 (IKIITDSTCD…PKVCALFYVE (274 aa)) form the DegV domain. Residues Thr-62 and Ser-94 each contribute to the hexadecanoate site.

Its function is as follows. May bind long-chain fatty acids, such as palmitate, and may play a role in lipid transport or fatty acid metabolism. This chain is DegV domain-containing protein CPE1310, found in Clostridium perfringens (strain 13 / Type A).